We begin with the raw amino-acid sequence, 228 residues long: ATP-dependent dethiobiotin synthetase BioD (228 aa).

Residue 14 to 19 coordinates ATP; the sequence is DAGKTL. T18 provides a ligand contact to Mg(2+). K39 is an active-site residue. ATP is bound by residues D56, 117-120, and 206-208; these read EGAG and PRL. Positions 56 and 117 each coordinate Mg(2+).

Belongs to the dethiobiotin synthetase family. Homodimer. It depends on Mg(2+) as a cofactor.

It is found in the cytoplasm. The catalysed reaction is (7R,8S)-7,8-diammoniononanoate + CO2 + ATP = (4R,5S)-dethiobiotin + ADP + phosphate + 3 H(+). It functions in the pathway cofactor biosynthesis; biotin biosynthesis; biotin from 7,8-diaminononanoate: step 1/2. Its function is as follows. Catalyzes a mechanistically unusual reaction, the ATP-dependent insertion of CO2 between the N7 and N8 nitrogen atoms of 7,8-diaminopelargonic acid (DAPA, also called 7,8-diammoniononanoate) to form a ureido ring. In Cellvibrio japonicus (strain Ueda107) (Pseudomonas fluorescens subsp. cellulosa), this protein is ATP-dependent dethiobiotin synthetase BioD.